Reading from the N-terminus, the 374-residue chain is NADH-quinone oxidoreductase subunit D 1 (374 aa).

This sequence belongs to the complex I 49 kDa subunit family. In terms of assembly, NDH-1 is composed of 14 different subunits. Subunits NuoB, C, D, E, F, and G constitute the peripheral sector of the complex.

Its subcellular location is the cell membrane. It catalyses the reaction a quinone + NADH + 5 H(+)(in) = a quinol + NAD(+) + 4 H(+)(out). Functionally, NDH-1 shuttles electrons from NADH, via FMN and iron-sulfur (Fe-S) centers, to quinones in the respiratory chain. The immediate electron acceptor for the enzyme in this species is believed to be ubiquinone. Couples the redox reaction to proton translocation (for every two electrons transferred, four hydrogen ions are translocated across the cytoplasmic membrane), and thus conserves the redox energy in a proton gradient. The sequence is that of NADH-quinone oxidoreductase subunit D 1 from Roseiflexus sp. (strain RS-1).